The following is a 1860-amino-acid chain: Proprotein convertase subtilisin/kexin type 5 (1860 aa).

A signal peptide spans 1–32 (MGWGSRCCCPGRLDLLCVLALLGGCLLPVCRT). Positions 33–114 (RVYTNHWAVK…QQVVKKRTKR (82 aa)) are excised as a propeptide. Topologically, residues 115-1743 (DYDFSRAQST…VRPATEHFKT (1629 aa)) are extracellular. The region spanning 134-453 (MWYMHCSDNT…FGLMDAEAMV (320 aa)) is the Peptidase S8 domain. Active-site charge relay system residues include D171 and H212. Residues N225 and N381 are each glycosylated (N-linked (GlcNAc...) asparagine). Residue S386 is the Charge relay system of the active site. Positions 461-601 (TVPRQHVCVE…SLVLYGTSVQ (141 aa)) constitute a P/Homo B domain. The Cell attachment site motif lies at 519-521 (RGD). 22 FU repeats span residues 630–680 (EDYA…GHYH), 683–730 (KKRC…GSYQ), 734–777 (KNLC…GRYF), 779–824 (GQDC…SYYF), 832–879 (YKSC…GEYV), 882–927 (HGHC…WKFE), 929–979 (ENQC…GHYA), 982–1028 (GNTC…GEVQ), 1032–1077 (YEEC…KTYS), 1079–1121 (EVEC…GFYG), 1125–1168 (MGEC…KTQE), 1177–1221 (LRKL…GTWP), 1225–1272 (SGSC…GSYA), 1274–1318 (DGIC…RHVA), 1320–1363 (KGVC…GFYA), 1365–1411 (SRHC…GTYY), 1415–1461 (TKEC…SEYW), 1465–1510 (APGC…GYYA), 1514–1559 (SNRC…GYYA), 1563–1610 (TGRC…HYYV), 1614–1659 (TQTC…GEYR), and 1665–1712 (KFNC…SDPP). Residues 636 to 1727 (CDPECSEVGC…CDCQDTTDEC (1092 aa)) form a CRM (Cys-rich motif) region. N665 carries an N-linked (GlcNAc...) asparagine glycan. N-linked (GlcNAc...) asparagine glycans are attached at residues N752, N802, and N852. Residues 869–913 (MGAICKDGEYVDEHGHCQTCEASCAKCQGPTQEDCTTCPMTRIFD) form the PLAC domain. N1014 carries an N-linked (GlcNAc...) asparagine glycan. Residue N1191 is glycosylated (N-linked (GlcNAc...) asparagine). Residue N1290 is glycosylated (N-linked (GlcNAc...) asparagine). The N-linked (GlcNAc...) asparagine glycan is linked to N1497. Residues N1685 and N1707 are each glycosylated (N-linked (GlcNAc...) asparagine). A helical membrane pass occupies residues 1744–1764 (ALFITSSMMLVLLLGAAVVVW). Topologically, residues 1765 to 1860 (KKSRGRVQPA…YDDESYSYYQ (96 aa)) are cytoplasmic. AC regions lie at residues 1807–1826 (VIEY…IVYM) and 1838–1860 (YGLL…SYYQ).

This sequence belongs to the peptidase S8 family. As to expression, expressed in T-lymphocytes.

Its subcellular location is the secreted. It localises to the endomembrane system. Functionally, serine endoprotease that processes various proproteins by cleavage at paired basic amino acids, recognizing the RXXX[KR]R consensus motif. Likely functions in the constitutive and regulated secretory pathways. Plays an essential role in pregnancy establishment by proteolytic activation of a number of important factors such as BMP2, CALD1 and alpha-integrins. In Homo sapiens (Human), this protein is Proprotein convertase subtilisin/kexin type 5 (PCSK5).